We begin with the raw amino-acid sequence, 125 residues long: Fluoride-specific ion channel FluC (125 aa).

A run of 4 helical transmembrane segments spans residues 4–24 (WLFV…ISEL), 35–55 (YGTL…FALI), 69–89 (LMVG…DTVV), and 103–123 (MGLN…LVAS). Gly-75 and Thr-78 together coordinate Na(+).

Belongs to the fluoride channel Fluc/FEX (TC 1.A.43) family.

It localises to the cell inner membrane. It carries out the reaction fluoride(in) = fluoride(out). With respect to regulation, na(+) is not transported, but it plays an essential structural role and its presence is essential for fluoride channel function. Fluoride-specific ion channel. Important for reducing fluoride concentration in the cell, thus reducing its toxicity. The sequence is that of Fluoride-specific ion channel FluC from Aeromonas salmonicida (strain A449).